We begin with the raw amino-acid sequence, 688 residues long: PTS system glucoside-specific EIICBA component (688 aa).

One can recognise a PTS EIIC type-1 domain in the interval 3–427; sequence KKLFGQLQRI…FKLKTPGRED (425 aa). A run of 10 helical transmembrane segments spans residues 12-32, 81-101, 137-157, 182-202, 223-243, 284-304, 315-335, 340-360, 364-384, and 395-415; these read IGKALMLPVAILPAAGILLAF, LGLAGGDGVAALAALVGYLIM, LVLGIPTLQTGVFGGIIMGAL, FVPIVTSVVAIATGVLLSFAW, LTTFIFGIIERSLIPFGLHHI, AFTTGKYPFMMFGLPAAAFAI, VVGGLMLSAGLTAFLTGITEP, FLFVAPVLYGIHVLLAGTSFL, LLGVKIGMTFSGGFIDYILYG, and LVIPVGIVYAIVYYFLFDFAI. Positions 438–519 constitute a PTS EIIB type-1 domain; that stretch reads AKLPFDVLDA…AKIMSGEITK (82 aa). Catalysis depends on C460, which acts as the Phosphocysteine intermediate; for EIIB activity. In terms of domain architecture, PTS EIIA type-1 spans 560-664; that stretch reads DQVFAGKMMG…SIVTPMIITN (105 aa). Catalysis depends on H612, which acts as the Tele-phosphohistidine intermediate; for EIIA activity.

It is found in the cell membrane. The phosphoenolpyruvate-dependent sugar phosphotransferase system (sugar PTS), a major carbohydrate active -transport system, catalyzes the phosphorylation of incoming sugar substrates concomitantly with their translocation across the cell membrane. This system is involved in alpha- and beta-glucoside transport. This is PTS system glucoside-specific EIICBA component (glcB) from Staphylococcus aureus (strain JH1).